We begin with the raw amino-acid sequence, 436 residues long: Adenosylhomocysteinase (436 aa).

Positions 62, 136, and 161 each coordinate substrate. 162-164 is an NAD(+) binding site; the sequence is TTT. Residues Lys-191 and Asp-195 each contribute to the substrate site. Residues Asn-196, 225–230, Glu-248, Asn-283, 304–306, and Asn-352 each bind NAD(+); these read GFGDVG and IGH.

The protein belongs to the adenosylhomocysteinase family. Requires NAD(+) as cofactor.

It is found in the cytoplasm. The catalysed reaction is S-adenosyl-L-homocysteine + H2O = L-homocysteine + adenosine. The protein operates within amino-acid biosynthesis; L-homocysteine biosynthesis; L-homocysteine from S-adenosyl-L-homocysteine: step 1/1. In terms of biological role, may play a key role in the regulation of the intracellular concentration of adenosylhomocysteine. The polypeptide is Adenosylhomocysteinase (Leptospira interrogans serogroup Icterohaemorrhagiae serovar copenhageni (strain Fiocruz L1-130)).